The chain runs to 446 residues: Exodeoxyribonuclease 7 large subunit (446 aa).

This sequence belongs to the XseA family. In terms of assembly, heterooligomer composed of large and small subunits.

The protein localises to the cytoplasm. It catalyses the reaction Exonucleolytic cleavage in either 5'- to 3'- or 3'- to 5'-direction to yield nucleoside 5'-phosphates.. Functionally, bidirectionally degrades single-stranded DNA into large acid-insoluble oligonucleotides, which are then degraded further into small acid-soluble oligonucleotides. This is Exodeoxyribonuclease 7 large subunit from Streptococcus pneumoniae (strain ATCC BAA-255 / R6).